Consider the following 261-residue polypeptide: tRNA U34 carboxymethyltransferase (261 aa).

Residues K25, W39, K44, G63, 114–115 (VE), Y135, and R250 contribute to the carboxy-S-adenosyl-L-methionine site.

Belongs to the class I-like SAM-binding methyltransferase superfamily. CmoB family. In terms of assembly, homotetramer.

The enzyme catalyses carboxy-S-adenosyl-L-methionine + 5-hydroxyuridine(34) in tRNA = 5-carboxymethoxyuridine(34) in tRNA + S-adenosyl-L-homocysteine + H(+). Catalyzes carboxymethyl transfer from carboxy-S-adenosyl-L-methionine (Cx-SAM) to 5-hydroxyuridine (ho5U) to form 5-carboxymethoxyuridine (cmo5U) at position 34 in tRNAs. The protein is tRNA U34 carboxymethyltransferase of Helicobacter pylori (strain P12).